We begin with the raw amino-acid sequence, 997 residues long: Kinesin-like protein KIF19 (997 aa).

Residues 11–346 (QLTVALRIRP…LTYADRAKNI (336 aa)) form the Kinesin motor domain. 104 to 111 (GPTGCGKT) is a binding site for ATP. Residues 360–437 (HIAQYTSIIS…REQMDIRRQL (78 aa)) adopt a coiled-coil conformation. A compositionally biased stretch (basic and acidic residues) spans 468–491 (RARKWRDEHRKETYGKDDSEKDSD). The interval 468 to 503 (RARKWRDEHRKETYGKDDSEKDSDTGDDQSDFIEPP) is disordered. A coiled-coil region spans residues 508-577 (ARETIQILEG…ELEIENTEMQ (70 aa)). Disordered regions lie at residues 662–690 (NLTAEENLQEPDSDQESVRTFGSDNRNPI), 792–811 (GDRLQPMKERSNLSVHSMSE), and 848–890 (GGGS…SRSF). Composition is skewed to basic and acidic residues over residues 792-802 (GDRLQPMKERS) and 869-880 (QKLEKREESLEV). A coiled-coil region spans residues 861-889 (HRTQKKQAQKLEKREESLEVKRRKKRSRS).

Belongs to the TRAFAC class myosin-kinesin ATPase superfamily. Kinesin family.

Its subcellular location is the cytoplasm. The protein resides in the cytoskeleton. It is found in the cell projection. It localises to the cilium. Functionally, plus end-directed microtubule-dependent motor protein that regulates the length of motile cilia by mediating depolymerization of microtubules at ciliary tips. In Xenopus laevis (African clawed frog), this protein is Kinesin-like protein KIF19 (kif19).